The chain runs to 101 residues: Small ribosomal subunit protein uS14 (101 aa).

The interval 1-24 (MAKVSSIKKNEKRKKLSQSLHNKR) is disordered. The span at 10 to 24 (NEKRKKLSQSLHNKR) shows a compositional bias: basic residues.

It belongs to the universal ribosomal protein uS14 family. As to quaternary structure, part of the 30S ribosomal subunit. Contacts proteins S3 and S10.

Its function is as follows. Binds 16S rRNA, required for the assembly of 30S particles and may also be responsible for determining the conformation of the 16S rRNA at the A site. This is Small ribosomal subunit protein uS14 from Rickettsia bellii (strain OSU 85-389).